The following is a 294-amino-acid chain: 4-hydroxy-tetrahydrodipicolinate synthase (294 aa).

T48 is a binding site for pyruvate. Catalysis depends on Y136, which acts as the Proton donor/acceptor. K164 (schiff-base intermediate with substrate) is an active-site residue. V206 provides a ligand contact to pyruvate.

It belongs to the DapA family. In terms of assembly, homotetramer; dimer of dimers.

Its subcellular location is the cytoplasm. It carries out the reaction L-aspartate 4-semialdehyde + pyruvate = (2S,4S)-4-hydroxy-2,3,4,5-tetrahydrodipicolinate + H2O + H(+). It functions in the pathway amino-acid biosynthesis; L-lysine biosynthesis via DAP pathway; (S)-tetrahydrodipicolinate from L-aspartate: step 3/4. Catalyzes the condensation of (S)-aspartate-beta-semialdehyde [(S)-ASA] and pyruvate to 4-hydroxy-tetrahydrodipicolinate (HTPA). This Desulforudis audaxviator (strain MP104C) protein is 4-hydroxy-tetrahydrodipicolinate synthase.